A 61-amino-acid polypeptide reads, in one-letter code: Probradykinin-1 (61 aa).

The first 22 residues, 1-22, serve as a signal peptide directing secretion; the sequence is MSFLKKSLFLVLFLGLVSFSIC. Positions 23-48 are excised as a propeptide; that stretch reads EEEKRETEEEENKDETEEQSEEKKRF. A disordered region spans residues 24 to 61; it reads EEKRETEEEENKDETEEQSEEKKRFEPVPPGFTPFRLT. Positions 30–42 are enriched in acidic residues; it reads EEEENKDETEEQS.

The protein belongs to the frog skin active peptide (FSAP) family. Bradykinin-related peptide subfamily. In terms of tissue distribution, expressed by the skin glands.

Its subcellular location is the secreted. In terms of biological role, may produce in vitro relaxation of rat arterial smooth muscle and constriction of intestinal smooth muscle. May target bradykinin receptors (BDKRB). This is Probradykinin-1 from Pithecopus azureus (Orange-legged monkey tree frog).